A 183-amino-acid polypeptide reads, in one-letter code: Fetal and adult testis-expressed transcript protein (183 aa).

The segment at 42-66 (SRSRGASQKKQKLEQKAAGSASAKR) is disordered. The chain crosses the membrane as a helical span at residues 163–181 (TLIIAVLVSASIANLWLWM).

Interacts with BIK and RNF183. Interacts with IMMT/MIC60and EMD. Testis-specific in fetus (aged from 6 to 11 weeks). In adult, expressed predominantly in testis, with some expression in lung, heart, kidney, adrenal gland and whole brain. Highly expressed in certain types of cancer tissues such as hepatocellular carcinoma, colon and gastric cancer. Weakly expressed in normal pancreas.

It localises to the mitochondrion. Its subcellular location is the mitochondrion outer membrane. It is found in the endoplasmic reticulum membrane. Involved in the regulation of endoplasmic reticulum (ER)-mitochondria coupling. Negatively regulates the ER-mitochondria distance and Ca(2+) transfer from ER to mitochondria possibly implicating it in the regulation of apoptosis. May collaborate with RNF183 to restrain BIK protein levels thus regulating apoptotic signaling. This Homo sapiens (Human) protein is Fetal and adult testis-expressed transcript protein (FATE1).